The chain runs to 441 residues: CBL-interacting serine/threonine-protein kinase 3 (441 aa).

The Protein kinase domain maps to Y14–F269. Residues I20–V28 and K43 each bind ATP. The active-site Proton acceptor is D137. Positions D155–E184 are activation loop. Residues E307–D331 enclose the NAF domain. Positions K337–V366 are PPI.

It belongs to the protein kinase superfamily. CAMK Ser/Thr protein kinase family. SNF1 subfamily. Interacts with CBL3 and CBL9. It depends on Mn(2+) as a cofactor. As to expression, mostly expressed in germinating seeds and young seedlings. Detected at low levels in roots, stems, leaves and flowers.

The catalysed reaction is L-seryl-[protein] + ATP = O-phospho-L-seryl-[protein] + ADP + H(+). The enzyme catalyses L-threonyl-[protein] + ATP = O-phospho-L-threonyl-[protein] + ADP + H(+). In terms of biological role, involved in the resistance to some abiotic stresses (e.g. high salt, hyperosmotic stress) in young seedlings, by regulating the expression of several stress-inducible genes (cold- and salt-induced genes but not drought-responsive genes). Required for the ABA response during germination. CIPK serine-threonine protein kinases interact with CBL proteins. Binding of a CBL protein to the regulatory NAF domain of CIPK protein lead to the activation of the kinase in a calcium-dependent manner. The CBL9/CIPK3 complex acts in the regulation of abscisic acid response in seed germination. The sequence is that of CBL-interacting serine/threonine-protein kinase 3 (CIPK3) from Arabidopsis thaliana (Mouse-ear cress).